The primary structure comprises 182 residues: Small ribosomal subunit protein uS9 (182 aa).

This sequence belongs to the universal ribosomal protein uS9 family.

This Corynebacterium glutamicum (strain R) protein is Small ribosomal subunit protein uS9.